Here is a 230-residue protein sequence, read N- to C-terminus: MTTLTARPEAITFDPQQSALIVVDMQNAYATPGGYLDLAGFDVSTTRPVIANIQTAVTAARAAGMLIIWFQNGWDEQYVEAGGPGSPNFHKSNALKTMRNQPQLQGKLLAKGSWDYQLVDELMPQPGDIVLPKPRYSGFFNTPLDSILRSRGIRHLVFTGIATNVCVESTLRDGFFLEYFGVVLEDATHQAGPEFAQKAALFNIETFFGWVSDVETFCDALSSTSFARIA.

D24 serves as the catalytic Proton acceptor. K133 is an active-site residue. C166 acts as the Nucleophile in catalysis.

Belongs to the isochorismatase family. RutB subfamily.

It catalyses the reaction (Z)-3-ureidoacrylate + H2O + H(+) = (Z)-3-aminoacrylate + NH4(+) + CO2. It carries out the reaction (Z)-3-ureidoacrylate + H2O = (Z)-3-aminoacrylate + carbamate + H(+). The enzyme catalyses (Z)-2-methylureidoacrylate + H2O + H(+) = (Z)-2-methylaminoacrylate + NH4(+) + CO2. In terms of biological role, hydrolyzes ureidoacrylate to form aminoacrylate and carbamate. The carbamate hydrolyzes spontaneously, thereby releasing one of the nitrogen atoms of the pyrimidine ring as ammonia and one of its carbon atoms as CO2. This chain is Ureidoacrylate amidohydrolase RutB, found in Escherichia coli O6:K15:H31 (strain 536 / UPEC).